The chain runs to 663 residues: Methionine--tRNA ligase (663 aa).

Residues 10 to 20 (AYTNGPLHLGH) carry the 'HIGH' region motif. Cysteine 142, cysteine 145, cysteine 154, and cysteine 157 together coordinate Zn(2+). Residues 323–327 (KMSTS) carry the 'KMSKS' region motif. Position 326 (threonine 326) interacts with ATP. The 101-residue stretch at 563–663 (YFGNIDLRVG…RDLPVGSKIH (101 aa)) folds into the tRNA-binding domain.

It belongs to the class-I aminoacyl-tRNA synthetase family. MetG type 1 subfamily. In terms of assembly, homodimer. It depends on Zn(2+) as a cofactor.

Its subcellular location is the cytoplasm. It catalyses the reaction tRNA(Met) + L-methionine + ATP = L-methionyl-tRNA(Met) + AMP + diphosphate. Its function is as follows. Is required not only for elongation of protein synthesis but also for the initiation of all mRNA translation through initiator tRNA(fMet) aminoacylation. This is Methionine--tRNA ligase from Methanococcus maripaludis (strain C5 / ATCC BAA-1333).